The sequence spans 180 residues: Ribulose bisphosphate carboxylase small subunit, chloroplastic 4 (180 aa).

A chloroplast-targeting transit peptide spans 1 to 56 (MASSIVSSAAVATRANGAQASMVGPFTGLKSTASFPVSRKQNLDITSIASNGGRVR).

The protein belongs to the RuBisCO small chain family. In terms of assembly, heterohexadecamer of 8 large and 8 small subunits.

Its subcellular location is the plastid. The protein localises to the chloroplast. Its function is as follows. RuBisCO catalyzes two reactions: the carboxylation of D-ribulose 1,5-bisphosphate, the primary event in carbon dioxide fixation, as well as the oxidative fragmentation of the pentose substrate. Both reactions occur simultaneously and in competition at the same active site. Although the small subunit is not catalytic it is essential for maximal activity. This is Ribulose bisphosphate carboxylase small subunit, chloroplastic 4 from Solanum tuberosum (Potato).